A 248-amino-acid chain; its full sequence is tRNA (guanine-N(1)-)-methyltransferase (248 aa).

S-adenosyl-L-methionine-binding positions include G113 and 133–138; that span reads IGDYVL. The tract at residues 226-248 is disordered; that stretch reads ARPAQTIRAKGESQKTPKNKTDG. Positions 234–248 are enriched in basic and acidic residues; sequence AKGESQKTPKNKTDG.

The protein belongs to the RNA methyltransferase TrmD family. As to quaternary structure, homodimer.

The protein resides in the cytoplasm. The catalysed reaction is guanosine(37) in tRNA + S-adenosyl-L-methionine = N(1)-methylguanosine(37) in tRNA + S-adenosyl-L-homocysteine + H(+). Specifically methylates guanosine-37 in various tRNAs. This chain is tRNA (guanine-N(1)-)-methyltransferase, found in Rhodopseudomonas palustris (strain ATCC BAA-98 / CGA009).